A 500-amino-acid polypeptide reads, in one-letter code: Zinc finger protein ENHYDROUS (500 aa).

The segment at 1-42 (MPVDLDNSSTVSGDASVSSTGNQNLTPKSVGKKKRNLPGMPD) is disordered. Over residues 8–21 (SSTVSGDASVSSTG) the composition is skewed to low complexity. Ser51 carries the phosphoserine modification. C2H2-type zinc fingers lie at residues 61 to 83 (FVCE…RRGH) and 102 to 132 (YVCP…CRKH). The Nuclear localization signal signature appears at 124-131 (IKKHFCRK). A C2H2-type 2; degenerate zinc finger spans residues 137–160 (WKCEKCSKKYAVQSDWKAHSKICG). Zn(2+)-binding residues include Cys139, Cys142, His155, Cys159, Cys166, Cys168, His181, and Cys185. The segment at 164-187 (YKCDCGTLFSRRDSFITHRAFCDA) adopts a CCHC-type 2; atypical zinc-finger fold. The tract at residues 174–186 (RRDSFITHRAFCD) is SHR-binding. Residues 196–236 (HTQSKKLYPETVTRKNPEIEQKSPAAVESSPSLPPSSPPSV) form a disordered region. Residues 207–216 (VTRKNPEIEQ) show a composition bias toward basic and acidic residues.

As to quaternary structure, interacts with the DELLA proteins (e.g. GAI/RGA2, RGA, RGL1, RGL2 and RGLG3), acting as coactivators. At 3 days post anthesis (DPA), expressed in the chalazal endosperm region. By 6 DPA, expressed in the endosperm and embryo. In fully germinated seed, strongest expression in the root tip and not detected in the cotyledons. In 4-days old seedlings, restricted to the vasculature of the cotyledons, the shoot apical meristem region, and the root tip. By 8 days, restricted to newly emerged leaves.

Its subcellular location is the nucleus. Its function is as follows. Transcription factor promoting the transition to germination by regulating light and hormonal signaling during seed maturation. Acts as a positive regulator of phytochrome and/or gibberellin action. In Arabidopsis thaliana (Mouse-ear cress), this protein is Zinc finger protein ENHYDROUS.